The primary structure comprises 591 residues: PE-PGRS family protein PE_PGRS5 (591 aa).

Residues 1 to 93 (MSFVIAQPEM…AGAYASAEAA (93 aa)) enclose the PE domain. The tract at residues 94–591 (NAGPNMLAAV…GGKGNNGNPG (498 aa)) is PGRS. 6 stretches are compositionally biased toward gly residues: residues 303–324 (GAGGAGGAGGDGAPGGNGGNGG), 336–363 (ASGGNGATGGNGGVGAPGGAGGNGGHVS), 371–412 (GAGG…GDGG), 477–491 (SEAGDGGKGGLGGDG), 539–567 (AGTGGDGGVGGTGAAGGKGGAGGSGGVNG), and 579–591 (GATGGKGNNGNPG). Disordered regions lie at residues 303-412 (GAGG…GDGG), 468-491 (GSVNTPIGGSEAGDGGKGGLGGDG), and 539-591 (AGTG…GNPG).

It belongs to the mycobacterial PE family. PGRS subfamily. As to quaternary structure, interacts with human TLR4.

The protein localises to the host endoplasmic reticulum. In terms of biological role, involved in endoplasmic reticulum (ER) stress-mediated apoptosis through human Toll-like receptor 4 (TLR4) signaling pathway. Localizes to the host ER, leading to ER stress, disruption of intracellular Ca(2+) homeostasis and increase of nitric oxide (NO) and reactive oxygen species (ROS) levels. Stress response results in caspase-8 activation and apoptosis of macrophage cells. Apoptosis may lead to dissemination of the bacteria, thereby spreading the disease. The chain is PE-PGRS family protein PE_PGRS5 from Mycobacterium tuberculosis (strain ATCC 25618 / H37Rv).